Reading from the N-terminus, the 702-residue chain is Elongation factor G (702 aa).

One can recognise a tr-type G domain in the interval 8–290 (SRYRNIGISA…AVIEYLPSPT (283 aa)). GTP-binding positions include 17–24 (AHIDAGKT), 88–92 (DTPGH), and 142–145 (NKMD).

This sequence belongs to the TRAFAC class translation factor GTPase superfamily. Classic translation factor GTPase family. EF-G/EF-2 subfamily.

The protein localises to the cytoplasm. Functionally, catalyzes the GTP-dependent ribosomal translocation step during translation elongation. During this step, the ribosome changes from the pre-translocational (PRE) to the post-translocational (POST) state as the newly formed A-site-bound peptidyl-tRNA and P-site-bound deacylated tRNA move to the P and E sites, respectively. Catalyzes the coordinated movement of the two tRNA molecules, the mRNA and conformational changes in the ribosome. This is Elongation factor G from Edwardsiella ictaluri (strain 93-146).